Here is a 629-residue protein sequence, read N- to C-terminus: Probable indole-3-acetic acid-amido synthetase GH3.4 (629 aa).

It belongs to the IAA-amido conjugating enzyme family. In terms of tissue distribution, expressed in flowers.

Its function is as follows. May catalyze the synthesis of indole-3-acetic acid (IAA)-amino acid conjugates, providing a mechanism for the plant to cope with the presence of excess auxin. This chain is Probable indole-3-acetic acid-amido synthetase GH3.4 (GH3.4), found in Oryza sativa subsp. japonica (Rice).